The following is an 89-amino-acid chain: Small ribosomal subunit protein uS15 (89 aa).

It belongs to the universal ribosomal protein uS15 family. In terms of assembly, part of the 30S ribosomal subunit. Forms a bridge to the 50S subunit in the 70S ribosome, contacting the 23S rRNA.

One of the primary rRNA binding proteins, it binds directly to 16S rRNA where it helps nucleate assembly of the platform of the 30S subunit by binding and bridging several RNA helices of the 16S rRNA. Functionally, forms an intersubunit bridge (bridge B4) with the 23S rRNA of the 50S subunit in the ribosome. This Mycolicibacterium smegmatis (strain ATCC 700084 / mc(2)155) (Mycobacterium smegmatis) protein is Small ribosomal subunit protein uS15.